The sequence spans 25 residues: Nicotinic acetylcholine receptor-binding protein Mnn-4 (25 aa).

The cysteines at positions 3 and 20 are disulfide-linked.

It belongs to the three-finger toxin family. Short-chain subfamily. Expressed by the venom gland.

Its subcellular location is the secreted. Binds and may inhibit nicotinic acetylcholine receptors (nAChR). The chain is Nicotinic acetylcholine receptor-binding protein Mnn-4 from Micrurus nigrocinctus (Central American coral snake).